Here is a 105-residue protein sequence, read N- to C-terminus: Multidrug resistance protein EbrA (105 aa).

Transmembrane regions (helical) follow at residues 2–22 (IAGYIFLLIAILSEAAAAAML), 35–55 (VLVVIGYGLAFYMMSLTLQVI), 60–80 (SYATWSGAGTVLTAIIGVLWF), and 87–104 (RNIAGIICLVSGVVLINL).

The protein belongs to the drug/metabolite transporter (DMT) superfamily. Small multidrug resistance (SMR) (TC 2.A.7.1) family. EbrA/EbrB subfamily. In terms of assembly, the efflux pump is composed of EbrA and EbrB.

It is found in the cell membrane. In terms of biological role, part of a multidrug efflux pump. Confers resistance to cationic lipophilic dyes such as ethidium bromide, acriflavine, pyronine Y and safranin O. The efflux is probably coupled to an influx of protons. The polypeptide is Multidrug resistance protein EbrA (ebrA) (Bacillus licheniformis (strain ATCC 14580 / DSM 13 / JCM 2505 / CCUG 7422 / NBRC 12200 / NCIMB 9375 / NCTC 10341 / NRRL NRS-1264 / Gibson 46)).